Here is a 304-residue protein sequence, read N- to C-terminus: C-type lectin domain family 10 member A (304 aa).

Over 1–35 the chain is Cytoplasmic; it reads MIYENLQNSRIEEKTQEPGKAPSQSFLWRILSWTH. A helical; Signal-anchor for type II membrane protein transmembrane segment spans residues 36-56; the sequence is LLLFSLGLSLLLLVVVSVIGS. The Extracellular segment spans residues 57 to 304; it reads QNSQLRRDLG…ICEMKLAKES (248 aa). Asn-74 and Asn-166 each carry an N-linked (GlcNAc...) asparagine glycan. In terms of domain architecture, C-type lectin spans 172-298; sequence CCPLHWTEHE…QRTFRWICEM (127 aa). 3 disulfide bridges follow: Cys-173–Cys-184, Cys-201–Cys-296, and Cys-274–Cys-288.

In terms of assembly, homooligomer. Interacts with SIGLEC1, which may act as a counter-receptor for CLEC10A in lymph node. In terms of tissue distribution, detected in lymph node in the subcapsular sinus, interfollicular regions, T and B-cell boundary and in the areas surrounding high endothelial venules (at protein level). Expressed on the surface of activated macrophages. Expressed in heart, lung, testis, skeletal muscle, spleen, brain, kidney and thymus. Expressed in P388, RAW 264.7 and M1 cell lines.

The protein localises to the membrane. In terms of biological role, recognizes terminal galactose and N-acetylgalactosamine units. May participate in the interaction between tumoricidal macrophages and tumor cells. Plays a role in the recruitment of inflammatory monocytes to adipose tissue in diet-induced obesity. This Mus musculus (Mouse) protein is C-type lectin domain family 10 member A (Clec10a).